We begin with the raw amino-acid sequence, 129 residues long: Fluoride-specific ion channel FluC (129 aa).

Transmembrane regions (helical) follow at residues 5 to 25, 32 to 52, 60 to 80, and 99 to 119; these read LTIA…SGWV, AFPF…GLIM, LIPA…LTTF, and AMVN…LGVI. Na(+)-binding residues include Gly75 and Thr78.

The protein belongs to the fluoride channel Fluc/FEX (TC 1.A.43) family.

It is found in the cell inner membrane. The enzyme catalyses fluoride(in) = fluoride(out). Its activity is regulated as follows. Na(+) is not transported, but it plays an essential structural role and its presence is essential for fluoride channel function. Functionally, fluoride-specific ion channel. Important for reducing fluoride concentration in the cell, thus reducing its toxicity. The sequence is that of Fluoride-specific ion channel FluC from Pelobacter propionicus (strain DSM 2379 / NBRC 103807 / OttBd1).